The following is a 263-amino-acid chain: Putative steroid dehydrogenase 4 (263 aa).

Residue Y154 is the Proton acceptor of the active site.

This sequence belongs to the short-chain dehydrogenases/reductases (SDR) family. 17-beta-HSD 3 subfamily.

The sequence is that of Putative steroid dehydrogenase 4 (stdh-4) from Caenorhabditis elegans.